Reading from the N-terminus, the 396-residue chain is Coiled-coil domain-containing protein 1 (396 aa).

The first 21 residues, 1 to 21 (MAARSALCFLAIITLFVYACG), serve as a signal peptide directing secretion. Coiled coils occupy residues 53-73 (KIDS…NDRD), 109-129 (EVEK…DIID), 208-242 (DKES…ILDT), and 287-308 (YEEI…IDEH). Residues 231–256 (DANDDVNDILDTDDEDEDEDVQEEKD) are compositionally biased toward acidic residues. Disordered regions lie at residues 231–260 (DAND…EDIH) and 288–378 (EEIE…VADD).

As to expression, component of the acid-insoluble and acid-soluble organic matrix of calcified layers of the shell (at protein level).

The protein localises to the secreted. This Lottia gigantea (Giant owl limpet) protein is Coiled-coil domain-containing protein 1.